Reading from the N-terminus, the 258-residue chain is Distal membrane-arm assembly complex protein 2 (258 aa).

The protein belongs to the ATP synthase subunit s family. Interacts with incompletely assembled mitochondrial NADH:ubiquinone oxidoreductase complex (complex I).

It is found in the mitochondrion. Required for the assembly of the mitochondrial NADH:ubiquinone oxidoreductase complex (complex I). Involved in the assembly of the distal region of complex I. This Mus musculus (Mouse) protein is Distal membrane-arm assembly complex protein 2 (Dmac2).